The sequence spans 135 residues: D-ribose pyranase (135 aa).

The Proton donor role is filled by His-20. Substrate is bound by residues Asp-28, His-102, and 124–126 (YSN).

This sequence belongs to the RbsD / FucU family. RbsD subfamily. Homodecamer.

Its subcellular location is the cytoplasm. The catalysed reaction is beta-D-ribopyranose = beta-D-ribofuranose. It participates in carbohydrate metabolism; D-ribose degradation; D-ribose 5-phosphate from beta-D-ribopyranose: step 1/2. In terms of biological role, catalyzes the interconversion of beta-pyran and beta-furan forms of D-ribose. This Thermotoga maritima (strain ATCC 43589 / DSM 3109 / JCM 10099 / NBRC 100826 / MSB8) protein is D-ribose pyranase.